The primary structure comprises 156 residues: UPF0460 protein in nifX 3'region (156 aa).

This sequence belongs to the UPF0460 family.

The chain is UPF0460 protein in nifX 3'region from Rhodobacter capsulatus (Rhodopseudomonas capsulata).